Consider the following 231-residue polypeptide: Ribonuclease 3 (231 aa).

Residues 3-130 form the RNase III domain; that stretch reads MHEFFENFGI…VTAAIYLDQT (128 aa). E43 lines the Mg(2+) pocket. D47 is a catalytic residue. Residues D116 and E119 each contribute to the Mg(2+) site. E119 is a catalytic residue. Positions 157 to 228 constitute a DRBM domain; sequence DYKSELQEII…AKDCLNKLKK (72 aa).

Belongs to the ribonuclease III family. In terms of assembly, homodimer. Mg(2+) is required as a cofactor.

It is found in the cytoplasm. It catalyses the reaction Endonucleolytic cleavage to 5'-phosphomonoester.. Functionally, digests double-stranded RNA. Involved in the processing of primary rRNA transcript to yield the immediate precursors to the large and small rRNAs (23S and 16S). Processes some mRNAs, and tRNAs when they are encoded in the rRNA operon. Processes pre-crRNA and tracrRNA of type II CRISPR loci if present in the organism. In Mesoplasma florum (strain ATCC 33453 / NBRC 100688 / NCTC 11704 / L1) (Acholeplasma florum), this protein is Ribonuclease 3.